The sequence spans 316 residues: Ribose-phosphate pyrophosphokinase (316 aa).

ATP-binding positions include 39 to 41 (DGE) and 98 to 99 (RQ). Mg(2+)-binding residues include histidine 133 and aspartate 172. The active site involves lysine 195. D-ribose 5-phosphate-binding positions include arginine 197, aspartate 221, and 225–229 (DTANT).

The protein belongs to the ribose-phosphate pyrophosphokinase family. Class I subfamily. Homohexamer. Requires Mg(2+) as cofactor.

It is found in the cytoplasm. The enzyme catalyses D-ribose 5-phosphate + ATP = 5-phospho-alpha-D-ribose 1-diphosphate + AMP + H(+). Its pathway is metabolic intermediate biosynthesis; 5-phospho-alpha-D-ribose 1-diphosphate biosynthesis; 5-phospho-alpha-D-ribose 1-diphosphate from D-ribose 5-phosphate (route I): step 1/1. In terms of biological role, involved in the biosynthesis of the central metabolite phospho-alpha-D-ribosyl-1-pyrophosphate (PRPP) via the transfer of pyrophosphoryl group from ATP to 1-hydroxyl of ribose-5-phosphate (Rib-5-P). The polypeptide is Ribose-phosphate pyrophosphokinase (Nitrosomonas europaea (strain ATCC 19718 / CIP 103999 / KCTC 2705 / NBRC 14298)).